The chain runs to 154 residues: uncharacterized protein (154 aa).

The tract at residues 1–37 (MDNLKEKPLSYNINNNNLNNNNNNNNNNNNNNNNINN) is disordered. Residues 12–37 (NINNNNLNNNNNNNNNNNNNNNNINN) show a composition bias toward low complexity. A glycan (N-linked (GlcNAc...) asparagine) is linked at N82. A helical membrane pass occupies residues 116-136 (IIITTIVVLLMIAVSLGLILA). N149 carries N-linked (GlcNAc...) asparagine glycosylation.

It localises to the membrane. This is an uncharacterized protein from Dictyostelium discoideum (Social amoeba).